A 349-amino-acid chain; its full sequence is Deoxyguanosinetriphosphate triphosphohydrolase-like protein (349 aa).

The HD domain maps to 80-197 (RLTHTLEVAQ…VKYSDKIAYV (118 aa)).

The protein belongs to the dGTPase family. Type 2 subfamily.

This Clostridium tetani (strain Massachusetts / E88) protein is Deoxyguanosinetriphosphate triphosphohydrolase-like protein.